A 423-amino-acid polypeptide reads, in one-letter code: AP-1 complex subunit mu-1 (423 aa).

Position 2 is an N-acetylserine (serine 2). Threonine 152, threonine 154, and threonine 223 each carry phosphothreonine. Positions 168 to 421 constitute an MHD domain; it reads KNEVFLDVIE…ITQNGDYQLR (254 aa).

The protein belongs to the adaptor complexes medium subunit family. In terms of assembly, adaptor protein complex 1 (AP-1) is a heterotetramer composed of two large adaptins (gamma-type subunit AP1G1 and beta-type subunit AP1B1), a medium adaptin (mu-type subunit AP1M1 or AP1M2) and a small adaptin (sigma-type subunit AP1S1 or AP1S2 or AP1S3). Interacts with MARCHF11. Post-translationally, phosphorylation of membrane-bound AP1M1/AP1M2 increases its affinity for sorting signals.

It localises to the cytoplasmic vesicle. Its subcellular location is the clathrin-coated vesicle membrane. It is found in the golgi apparatus. Its function is as follows. Subunit of clathrin-associated adaptor protein complex 1 that plays a role in protein sorting in the trans-Golgi network (TGN) and endosomes. The AP complexes mediate the recruitment of clathrin to membranes and the recognition of sorting signals within the cytosolic tails of transmembrane cargo molecules. This chain is AP-1 complex subunit mu-1, found in Rattus norvegicus (Rat).